We begin with the raw amino-acid sequence, 145 residues long: MSTGTPHYAADRSKSRKSNNNRSIPFRTPTTQKVVKTSIRLGPVNPPTPTRNTQGGHGFSAEFLEYRRRRQERHTVRLAKLPNETLIIGGANPFDARNVPEAIKKFRDLVDEKIGDKVHKKDANKSKIVFREEEEETQNGTITID.

A disordered region spans residues 1–59; it reads MSTGTPHYAADRSKSRKSNNNRSIPFRTPTTQKVVKTSIRLGPVNPPTPTRNTQGGHGF.

This is an uncharacterized protein from Caenorhabditis elegans.